The following is a 450-amino-acid chain: Ribosomal protein uS12 methylthiotransferase RimO (450 aa).

An MTTase N-terminal domain is found at 9–124 (NRINVVTLGC…LLSALEADYK (116 aa)). Cys-18, Cys-53, Cys-87, Cys-148, Cys-152, and Cys-155 together coordinate [4Fe-4S] cluster. The region spanning 134 to 365 (TTPKNYAYLK…EIQSQISWEL (232 aa)) is the Radical SAM core domain. Positions 367–434 (QQKIGEVFNV…DFDLYGEPLN (68 aa)) constitute a TRAM domain.

This sequence belongs to the methylthiotransferase family. RimO subfamily. Requires [4Fe-4S] cluster as cofactor.

The protein localises to the cytoplasm. It catalyses the reaction L-aspartate(89)-[ribosomal protein uS12]-hydrogen + (sulfur carrier)-SH + AH2 + 2 S-adenosyl-L-methionine = 3-methylsulfanyl-L-aspartate(89)-[ribosomal protein uS12]-hydrogen + (sulfur carrier)-H + 5'-deoxyadenosine + L-methionine + A + S-adenosyl-L-homocysteine + 2 H(+). Its function is as follows. Catalyzes the methylthiolation of an aspartic acid residue of ribosomal protein uS12. The chain is Ribosomal protein uS12 methylthiotransferase RimO from Christiangramia forsetii (strain DSM 17595 / CGMCC 1.15422 / KT0803) (Gramella forsetii).